A 112-amino-acid chain; its full sequence is Putative regulatory protein DP2861 (112 aa).

This sequence belongs to the RemA family.

The sequence is that of Putative regulatory protein DP2861 from Desulfotalea psychrophila (strain LSv54 / DSM 12343).